A 222-amino-acid chain; its full sequence is Urease accessory protein UreF (222 aa).

Belongs to the UreF family. UreD, UreF and UreG form a complex that acts as a GTP-hydrolysis-dependent molecular chaperone, activating the urease apoprotein by helping to assemble the nickel containing metallocenter of UreC. The UreE protein probably delivers the nickel.

It is found in the cytoplasm. In terms of biological role, required for maturation of urease via the functional incorporation of the urease nickel metallocenter. In Roseobacter denitrificans (strain ATCC 33942 / OCh 114) (Erythrobacter sp. (strain OCh 114)), this protein is Urease accessory protein UreF.